We begin with the raw amino-acid sequence, 472 residues long: ATP synthase subunit beta (472 aa).

155-162 (GGAGVGKT) is an ATP binding site.

Belongs to the ATPase alpha/beta chains family. F-type ATPases have 2 components, CF(1) - the catalytic core - and CF(0) - the membrane proton channel. CF(1) has five subunits: alpha(3), beta(3), gamma(1), delta(1), epsilon(1). CF(0) has three main subunits: a(1), b(2) and c(9-12). The alpha and beta chains form an alternating ring which encloses part of the gamma chain. CF(1) is attached to CF(0) by a central stalk formed by the gamma and epsilon chains, while a peripheral stalk is formed by the delta and b chains.

It is found in the cell inner membrane. The catalysed reaction is ATP + H2O + 4 H(+)(in) = ADP + phosphate + 5 H(+)(out). Its function is as follows. Produces ATP from ADP in the presence of a proton gradient across the membrane. The catalytic sites are hosted primarily by the beta subunits. This is ATP synthase subunit beta from Fervidobacterium nodosum (strain ATCC 35602 / DSM 5306 / Rt17-B1).